The chain runs to 187 residues: MASTADFKNGLVLQIDGQLWSIVEFQHVKPGKGPAFVRTKLKNVLSGKVVDKTYNAGVKVETATVDRRDTTYLYRDGSDFVFMDSQDYEQHPLPESLVGDAARFLLEGMPVQVAFHDGAPLYIELPVTVEFVVTHTEPGLQGDRSSAGTKPATLETGAQINVPLFINTGDKLKVDSRDGGYLGRVNA.

It belongs to the elongation factor P family.

The protein resides in the cytoplasm. The protein operates within protein biosynthesis; polypeptide chain elongation. Its function is as follows. Involved in peptide bond synthesis. Stimulates efficient translation and peptide-bond synthesis on native or reconstituted 70S ribosomes in vitro. Probably functions indirectly by altering the affinity of the ribosome for aminoacyl-tRNA, thus increasing their reactivity as acceptors for peptidyl transferase. The protein is Elongation factor P of Mycobacterium ulcerans (strain Agy99).